A 200-amino-acid polypeptide reads, in one-letter code: NAD(P)H dehydrogenase (quinone) (200 aa).

The Flavodoxin-like domain occupies 4-191; the sequence is VLVLYYSSYG…DIARYQGKHV (188 aa). Residues 10–15 and 79–81 each bind FMN; these read SSYGHV and TRF. Residue Tyr-12 participates in NAD(+) binding. Trp-99 lines the substrate pocket. Residues 114 to 120 and His-135 contribute to the FMN site; that span reads STGTQHG.

The protein belongs to the WrbA family. FMN is required as a cofactor.

The enzyme catalyses a quinone + NADH + H(+) = a quinol + NAD(+). It carries out the reaction a quinone + NADPH + H(+) = a quinol + NADP(+). The protein is NAD(P)H dehydrogenase (quinone) of Burkholderia multivorans (strain ATCC 17616 / 249).